A 128-amino-acid chain; its full sequence is Aspartate 1-decarboxylase (128 aa).

S25 (schiff-base intermediate with substrate; via pyruvic acid) is an active-site residue. Residue S25 is modified to Pyruvic acid (Ser). T57 contributes to the substrate binding site. Catalysis depends on Y58, which acts as the Proton donor. 73–75 contributes to the substrate binding site; sequence GSA.

It belongs to the PanD family. As to quaternary structure, heterooctamer of four alpha and four beta subunits. It depends on pyruvate as a cofactor. Post-translationally, is synthesized initially as an inactive proenzyme, which is activated by self-cleavage at a specific serine bond to produce a beta-subunit with a hydroxyl group at its C-terminus and an alpha-subunit with a pyruvoyl group at its N-terminus.

The protein resides in the cytoplasm. The enzyme catalyses L-aspartate + H(+) = beta-alanine + CO2. It participates in cofactor biosynthesis; (R)-pantothenate biosynthesis; beta-alanine from L-aspartate: step 1/1. Functionally, catalyzes the pyruvoyl-dependent decarboxylation of aspartate to produce beta-alanine. The chain is Aspartate 1-decarboxylase from Burkholderia lata (strain ATCC 17760 / DSM 23089 / LMG 22485 / NCIMB 9086 / R18194 / 383).